The primary structure comprises 284 residues: MEMO1 family protein MmarC5_0191 (284 aa).

This sequence belongs to the MEMO1 family.

The protein is MEMO1 family protein MmarC5_0191 of Methanococcus maripaludis (strain C5 / ATCC BAA-1333).